The chain runs to 150 residues: Cytochrome c oxidase subunit 5A, mitochondrial (150 aa).

The transit peptide at 1–41 (MLGAALRRCAVAATTWAGPRGLLHSARTPGPAAAIQSVRCY) directs the protein to the mitochondrion. Positions 2-20 (LGAALRRCAVAATTWAGPR) match the SIFI-degron motif. Residues Lys87 and Lys113 each carry the N6-acetyllysine modification. Thr141 is subject to Phosphothreonine.

The protein belongs to the cytochrome c oxidase subunit 5A family. In terms of assembly, component of the cytochrome c oxidase (complex IV, CIV), a multisubunit enzyme composed of 14 subunits. The complex is composed of a catalytic core of 3 subunits MT-CO1, MT-CO2 and MT-CO3, encoded in the mitochondrial DNA, and 11 supernumerary subunits COX4I, COX5A, COX5B, COX6A, COX6B, COX6C, COX7A, COX7B, COX7C, COX8 and NDUFA4, which are encoded in the nuclear genome. The complex exists as a monomer or a dimer and forms supercomplexes (SCs) in the inner mitochondrial membrane with NADH-ubiquinone oxidoreductase (complex I, CI) and ubiquinol-cytochrome c oxidoreductase (cytochrome b-c1 complex, complex III, CIII), resulting in different assemblies (supercomplex SCI(1)III(2)IV(1) and megacomplex MCI(2)III(2)IV(2)). Interacts with AFG1L. Interacts with RAB5IF. In response to mitochondrial stress, the precursor protein is ubiquitinated by the SIFI complex in the cytoplasm before mitochondrial import, leading to its degradation. Within the SIFI complex, UBR4 initiates ubiquitin chain that are further elongated or branched by KCMF1.

The protein resides in the mitochondrion inner membrane. It functions in the pathway energy metabolism; oxidative phosphorylation. Functionally, component of the cytochrome c oxidase, the last enzyme in the mitochondrial electron transport chain which drives oxidative phosphorylation. The respiratory chain contains 3 multisubunit complexes succinate dehydrogenase (complex II, CII), ubiquinol-cytochrome c oxidoreductase (cytochrome b-c1 complex, complex III, CIII) and cytochrome c oxidase (complex IV, CIV), that cooperate to transfer electrons derived from NADH and succinate to molecular oxygen, creating an electrochemical gradient over the inner membrane that drives transmembrane transport and the ATP synthase. Cytochrome c oxidase is the component of the respiratory chain that catalyzes the reduction of oxygen to water. Electrons originating from reduced cytochrome c in the intermembrane space (IMS) are transferred via the dinuclear copper A center (CU(A)) of subunit 2 and heme A of subunit 1 to the active site in subunit 1, a binuclear center (BNC) formed by heme A3 and copper B (CU(B)). The BNC reduces molecular oxygen to 2 water molecules using 4 electrons from cytochrome c in the IMS and 4 protons from the mitochondrial matrix. This chain is Cytochrome c oxidase subunit 5A, mitochondrial (COX5A), found in Macaca mulatta (Rhesus macaque).